The following is a 568-amino-acid chain: MAEQTNTPDLKPRSRDVTDGLERTAARGMLRAVGMGDDDWEKPQIGVASSWNEITPCNLSLDRLAQGCKDGVFAAGGFPMQFGTISVSDGISMGHEGMHFSLVSREVIADSVETVMQAERLDGSVLLAGCDKSLPGMLMAAARLDLASVFLYAGSILPGIAKLSDGTEREVTIIDAFEAVGACARGLMSRADVDAIERAICPGEGACGGMYTANTMASAAEALGMSLPGSAAPPATDRRRDGYARRSGQAVVELLRRGITARDILTKEAFENAIAVVMAFGGSTNAVLHLLAIAHEARVELTLDDFARVGRRVPHLADVKPFGAHVMTDVDRIGGVPVMMKTLLDAGLLHGDCLTVTGRTVAENLAHIAPPDPDGKVVRALNDPIHPTGGITILSGSLAPGGAVVKSAGFDEDVFTGTARVFDRERAAMDALEDGTITAGDVVVIRYEGPKGGPGMREMLAITAAIKGAGLGKDVLLLTDGRFSGGTTGLCVGHVAPEAVDGGPIAFVRDGDRIRLDVAAGTLDLLVEPAELERRKQDWRPLPPRYTRGVLAKYTKLVGSASVGAVCD.

The tract at residues 1–22 (MAEQTNTPDLKPRSRDVTDGLE) is disordered. Residues 10–22 (LKPRSRDVTDGLE) are compositionally biased toward basic and acidic residues. A [2Fe-2S] cluster-binding site is contributed by C57. D89 is a binding site for Mg(2+). C130 lines the [2Fe-2S] cluster pocket. The Mg(2+) site is built by D131 and K132. At K132 the chain carries N6-carboxylysine. C207 contributes to the [2Fe-2S] cluster binding site. Position 458 (E458) interacts with Mg(2+). The active-site Proton acceptor is S484.

This sequence belongs to the IlvD/Edd family. Homodimer. It depends on [2Fe-2S] cluster as a cofactor. Mg(2+) serves as cofactor.

The enzyme catalyses (2R)-2,3-dihydroxy-3-methylbutanoate = 3-methyl-2-oxobutanoate + H2O. The catalysed reaction is (2R,3R)-2,3-dihydroxy-3-methylpentanoate = (S)-3-methyl-2-oxopentanoate + H2O. Its pathway is amino-acid biosynthesis; L-isoleucine biosynthesis; L-isoleucine from 2-oxobutanoate: step 3/4. The protein operates within amino-acid biosynthesis; L-valine biosynthesis; L-valine from pyruvate: step 3/4. Functions in the biosynthesis of branched-chain amino acids. Catalyzes the dehydration of (2R,3R)-2,3-dihydroxy-3-methylpentanoate (2,3-dihydroxy-3-methylvalerate) into 2-oxo-3-methylpentanoate (2-oxo-3-methylvalerate) and of (2R)-2,3-dihydroxy-3-methylbutanoate (2,3-dihydroxyisovalerate) into 2-oxo-3-methylbutanoate (2-oxoisovalerate), the penultimate precursor to L-isoleucine and L-valine, respectively. The polypeptide is Dihydroxy-acid dehydratase 1 (Nocardia farcinica (strain IFM 10152)).